The sequence spans 1081 residues: Zinc finger protein 827 (1081 aa).

Basic and acidic residues predominate over residues 1–10 (MPRRKQEQPK). The mediates direct interaction with RBBP4 stretch occupies residues 1–14 (MPRRKQEQPKRLPS). Positions 1 to 77 (MPRRKQEQPK…DTSLGSTTPS (77 aa)) are disordered. Residues 3-5 (RRK) carry the RRK motif; mediates NuRD recruitment to telomeres motif. Residues 62–77 (EQSTSPDTSLGSTTPS) show a composition bias toward polar residues. Residues K176, K216, and K226 each participate in a glycyl lysine isopeptide (Lys-Gly) (interchain with G-Cter in SUMO2) cross-link. 2 disordered regions span residues 259–278 (KVSE…ASSF) and 307–348 (SSLL…SLEL). Positions 327–344 (VTPPPPPPPPPPPPPPPQ) are enriched in pro residues. Residues K360 and K372 each participate in a glycyl lysine isopeptide (Lys-Gly) (interchain with G-Cter in SUMO2) cross-link. 3 consecutive C2H2-type zinc fingers follow at residues 374 to 396 (FQCP…MVIH), 402 to 424 (HQCP…MKVH), and 433 to 455 (FQCQ…MRCH). Glycyl lysine isopeptide (Lys-Gly) (interchain with G-Cter in SUMO2) cross-links involve residues K466, K475, K523, K549, K580, K587, K597, K634, K639, and K658. K673 is covalently cross-linked (Glycyl lysine isopeptide (Lys-Gly) (interchain with G-Cter in SUMO1); alternate). K673 is covalently cross-linked (Glycyl lysine isopeptide (Lys-Gly) (interchain with G-Cter in SUMO2); alternate). Glycyl lysine isopeptide (Lys-Gly) (interchain with G-Cter in SUMO2) cross-links involve residues K704, K710, K742, K778, and K798. 2 C2H2-type zinc fingers span residues 817 to 839 (FPCD…LSLH) and 845 to 867 (YKCH…LTVH). Residues K870 and K891 each participate in a glycyl lysine isopeptide (Lys-Gly) (interchain with G-Cter in SUMO2) cross-link. 2 C2H2-type zinc fingers span residues 897–919 (YSCH…MSLH) and 929–952 (ICCT…GTKH). Residues 947–960 (HIGTKHTGEDRKTP) are compositionally biased toward basic and acidic residues. A disordered region spans residues 947-996 (HIGTKHTGEDRKTPSESNSPSSSSLSALSDSANSKDDSDGSQKNKGGNNL). K958 is covalently cross-linked (Glycyl lysine isopeptide (Lys-Gly) (interchain with G-Cter in SUMO2)). The span at 961–978 (SESNSPSSSSLSALSDSA) shows a compositional bias: low complexity. The span at 979–988 (NSKDDSDGSQ) shows a compositional bias: basic and acidic residues. A Glycyl lysine isopeptide (Lys-Gly) (interchain with G-Cter in SUMO2) cross-link involves residue K1014. 2 C2H2-type zinc fingers span residues 1019–1041 (FECV…LQIH) and 1047–1069 (FECD…KKCH).

Belongs to the krueppel C2H2-type zinc-finger protein family. Part of a transcription inhibitory ribonucleoprotein complex composed at least of the circular RNA circZNF827, HNRNPK and HNRNPL. Interacts with the nucleosome remodeling and histone deacetylase/NuRD complex. Interacts with RBBP4; the interaction is direct and recruits RBBP4, a component of the NuRD complex, to telomeres.

The protein resides in the nucleus. It is found in the chromosome. Its subcellular location is the telomere. Its function is as follows. As part of a ribonucleoprotein complex composed at least of HNRNPK, HNRNPL and the circular RNA circZNF827 that nucleates the complex on chromatin, may negatively regulate the transcription of genes involved in neuronal differentiation. Could also recruit the nucleosome remodeling and histone deacetylase/NuRD complex to telomeric regions of chromosomes to regulate chromatin remodeling as part of telomere maintenance. The chain is Zinc finger protein 827 (ZNF827) from Homo sapiens (Human).